Reading from the N-terminus, the 424-residue chain is Serine--tRNA ligase (424 aa).

229-231 (TAE) is an L-serine binding site. ATP contacts are provided by residues 260–262 (RKE) and Val276. Position 283 (Glu283) interacts with L-serine. 347–350 (ELVS) provides a ligand contact to ATP. Thr383 serves as a coordination point for L-serine.

It belongs to the class-II aminoacyl-tRNA synthetase family. Type-1 seryl-tRNA synthetase subfamily. As to quaternary structure, homodimer. The tRNA molecule binds across the dimer.

The protein resides in the cytoplasm. The enzyme catalyses tRNA(Ser) + L-serine + ATP = L-seryl-tRNA(Ser) + AMP + diphosphate + H(+). It carries out the reaction tRNA(Sec) + L-serine + ATP = L-seryl-tRNA(Sec) + AMP + diphosphate + H(+). Its pathway is aminoacyl-tRNA biosynthesis; selenocysteinyl-tRNA(Sec) biosynthesis; L-seryl-tRNA(Sec) from L-serine and tRNA(Sec): step 1/1. Its function is as follows. Catalyzes the attachment of serine to tRNA(Ser). Is also able to aminoacylate tRNA(Sec) with serine, to form the misacylated tRNA L-seryl-tRNA(Sec), which will be further converted into selenocysteinyl-tRNA(Sec). The polypeptide is Serine--tRNA ligase (Methanosphaera stadtmanae (strain ATCC 43021 / DSM 3091 / JCM 11832 / MCB-3)).